Reading from the N-terminus, the 154-residue chain is uncharacterized protein (154 aa).

A divalent metal cation contacts are provided by H47, H127, and H131. Y150 bears the Phosphotyrosine mark.

Belongs to the DinB family. As to quaternary structure, homodimer.

This is an uncharacterized protein from Bacillus subtilis (strain 168).